We begin with the raw amino-acid sequence, 607 residues long: Terpenoid synthase 9 (607 aa).

Mg(2+)-binding residues include aspartate 356, aspartate 360, asparagine 501, and aspartate 509. Residues 356–360 (DDTFD) carry the DDXXD motif motif.

The protein belongs to the terpene synthase family. Tpsa subfamily. Mg(2+) is required as a cofactor. Mn(2+) serves as cofactor. In terms of tissue distribution, predominantly expressed in roots but also in stems, leaves and flowers.

The protein localises to the cytoplasm. Its pathway is secondary metabolite biosynthesis; terpenoid biosynthesis. Involved in terpene biosynthesis in roots. Possesses diterpene (C20) synthase activity in vitro. Does not seem to be involved in sesquiterpene (C15) biosynthesis. This is Terpenoid synthase 9 from Arabidopsis thaliana (Mouse-ear cress).